A 217-amino-acid polypeptide reads, in one-letter code: PRA1 family protein B3 (217 aa).

The interval 1 to 24 (MMANPPTLPISDHSGGGSQSQQPV) is disordered. A run of 5 helical transmembrane segments spans residues 76 to 96 (LPYFKVNYVTIVSLVLALSLL), 98 to 118 (HPFSLLVLLCLFCAWIFLYLF), 138 to 158 (LGVLVILTIVVVFLTSVGSLL), 162 to 182 (LMIGFGIVCLHGAFRVPEDLF), and 193 to 213 (LLSFLSGAATSAAVAAASTPA).

Belongs to the PRA1 family. As to quaternary structure, interacts with PRA1B1, PRA1B2, PRA1B4, PRA1B5, PRA1B6 and PRA1E. As to expression, expressed in hypocotyls and shoot apex.

The protein localises to the endosome membrane. Its function is as follows. May be involved in both secretory and endocytic intracellular trafficking in the endosomal/prevacuolar compartments. The chain is PRA1 family protein B3 (PRA1B3) from Arabidopsis thaliana (Mouse-ear cress).